The following is a 321-amino-acid chain: 4-hydroxy-3-methylbut-2-enyl diphosphate reductase (321 aa).

A [4Fe-4S] cluster-binding site is contributed by Cys-13. (2E)-4-hydroxy-3-methylbut-2-enyl diphosphate is bound by residues His-41 and His-75. Positions 41 and 75 each coordinate dimethylallyl diphosphate. Isopentenyl diphosphate-binding residues include His-41 and His-75. Cys-97 provides a ligand contact to [4Fe-4S] cluster. His-125 is a (2E)-4-hydroxy-3-methylbut-2-enyl diphosphate binding site. A dimethylallyl diphosphate-binding site is contributed by His-125. His-125 lines the isopentenyl diphosphate pocket. Catalysis depends on Glu-127, which acts as the Proton donor. Thr-168 contributes to the (2E)-4-hydroxy-3-methylbut-2-enyl diphosphate binding site. Residue Cys-225 participates in [4Fe-4S] cluster binding. (2E)-4-hydroxy-3-methylbut-2-enyl diphosphate contacts are provided by Ser-253, Ser-254, Asn-255, and Ser-302. Dimethylallyl diphosphate-binding residues include Ser-253, Ser-254, Asn-255, and Ser-302. Isopentenyl diphosphate-binding residues include Ser-253, Ser-254, Asn-255, and Ser-302.

This sequence belongs to the IspH family. It depends on [4Fe-4S] cluster as a cofactor.

The enzyme catalyses isopentenyl diphosphate + 2 oxidized [2Fe-2S]-[ferredoxin] + H2O = (2E)-4-hydroxy-3-methylbut-2-enyl diphosphate + 2 reduced [2Fe-2S]-[ferredoxin] + 2 H(+). The catalysed reaction is dimethylallyl diphosphate + 2 oxidized [2Fe-2S]-[ferredoxin] + H2O = (2E)-4-hydroxy-3-methylbut-2-enyl diphosphate + 2 reduced [2Fe-2S]-[ferredoxin] + 2 H(+). It participates in isoprenoid biosynthesis; dimethylallyl diphosphate biosynthesis; dimethylallyl diphosphate from (2E)-4-hydroxy-3-methylbutenyl diphosphate: step 1/1. Its pathway is isoprenoid biosynthesis; isopentenyl diphosphate biosynthesis via DXP pathway; isopentenyl diphosphate from 1-deoxy-D-xylulose 5-phosphate: step 6/6. Catalyzes the conversion of 1-hydroxy-2-methyl-2-(E)-butenyl 4-diphosphate (HMBPP) into a mixture of isopentenyl diphosphate (IPP) and dimethylallyl diphosphate (DMAPP). Acts in the terminal step of the DOXP/MEP pathway for isoprenoid precursor biosynthesis. The polypeptide is 4-hydroxy-3-methylbut-2-enyl diphosphate reductase (Pelodictyon phaeoclathratiforme (strain DSM 5477 / BU-1)).